Reading from the N-terminus, the 618-residue chain is Proline--tRNA ligase (618 aa).

Belongs to the class-II aminoacyl-tRNA synthetase family. ProS type 1 subfamily. Homodimer.

The protein localises to the cytoplasm. The catalysed reaction is tRNA(Pro) + L-proline + ATP = L-prolyl-tRNA(Pro) + AMP + diphosphate. Catalyzes the attachment of proline to tRNA(Pro) in a two-step reaction: proline is first activated by ATP to form Pro-AMP and then transferred to the acceptor end of tRNA(Pro). As ProRS can inadvertently accommodate and process non-cognate amino acids such as alanine and cysteine, to avoid such errors it has two additional distinct editing activities against alanine. One activity is designated as 'pretransfer' editing and involves the tRNA(Pro)-independent hydrolysis of activated Ala-AMP. The other activity is designated 'posttransfer' editing and involves deacylation of mischarged Ala-tRNA(Pro). The misacylated Cys-tRNA(Pro) is not edited by ProRS. This Streptococcus pyogenes serotype M1 protein is Proline--tRNA ligase.